Here is a 187-residue protein sequence, read N- to C-terminus: Potassium-transporting ATPase KdpC subunit (187 aa).

A helical membrane pass occupies residues 11–31 (LILLMTVVTGALYPLAVTGIA).

This sequence belongs to the KdpC family. As to quaternary structure, the system is composed of three essential subunits: KdpA, KdpB and KdpC.

It is found in the cell inner membrane. Part of the high-affinity ATP-driven potassium transport (or Kdp) system, which catalyzes the hydrolysis of ATP coupled with the electrogenic transport of potassium into the cytoplasm. This subunit acts as a catalytic chaperone that increases the ATP-binding affinity of the ATP-hydrolyzing subunit KdpB by the formation of a transient KdpB/KdpC/ATP ternary complex. The chain is Potassium-transporting ATPase KdpC subunit from Pseudomonas entomophila (strain L48).